Reading from the N-terminus, the 526-residue chain is Na(+)/H(+) antiporter NhaB (526 aa).

A run of 13 helical transmembrane segments spans residues 14 to 34, 35 to 55, 99 to 119, 122 to 142, 146 to 166, 206 to 226, 239 to 259, 307 to 327, 328 to 348, 357 to 377, 397 to 417, 451 to 471, and 479 to 499; these read FLGYAPDWYKLTIFGFLLINP, LLFYFVSPFWAGWLLVVEFIF, MLLVFMVAGIYFMKQLLLFVF, LLLRIHSKPLLSLAFCMAAAF, FLDALTVIAVIISVAIGFYGI, LMMHAGVGTALGGVMTMVGEP, FVDFFLRMSPVTVPVFICGIL, AVIGVWLIIALAFHLAEVGLI, GLSVIIMATTFCGVTEEHAIG, FTALLTVFFAIVAVIIDQQLF, YLFNGLLSSISDNVFVGSVYI, ATPNGQAAFLFLLTSSLAPLI, and VIMALPYTIVMTLVGLLCVEF.

It belongs to the NhaB Na(+)/H(+) (TC 2.A.34) antiporter family.

It is found in the cell inner membrane. The enzyme catalyses 2 Na(+)(in) + 3 H(+)(out) = 2 Na(+)(out) + 3 H(+)(in). In terms of biological role, na(+)/H(+) antiporter that extrudes sodium in exchange for external protons. The sequence is that of Na(+)/H(+) antiporter NhaB from Pectobacterium atrosepticum (strain SCRI 1043 / ATCC BAA-672) (Erwinia carotovora subsp. atroseptica).